Consider the following 145-residue polypeptide: SsrA-binding protein (145 aa).

This sequence belongs to the SmpB family.

It is found in the cytoplasm. Functionally, required for rescue of stalled ribosomes mediated by trans-translation. Binds to transfer-messenger RNA (tmRNA), required for stable association of tmRNA with ribosomes. tmRNA and SmpB together mimic tRNA shape, replacing the anticodon stem-loop with SmpB. tmRNA is encoded by the ssrA gene; the 2 termini fold to resemble tRNA(Ala) and it encodes a 'tag peptide', a short internal open reading frame. During trans-translation Ala-aminoacylated tmRNA acts like a tRNA, entering the A-site of stalled ribosomes, displacing the stalled mRNA. The ribosome then switches to translate the ORF on the tmRNA; the nascent peptide is terminated with the 'tag peptide' encoded by the tmRNA and targeted for degradation. The ribosome is freed to recommence translation, which seems to be the essential function of trans-translation. The sequence is that of SsrA-binding protein from Mycoplasma genitalium (strain ATCC 33530 / DSM 19775 / NCTC 10195 / G37) (Mycoplasmoides genitalium).